The following is a 194-amino-acid chain: MAKSSQRKQRDCVNQCKSKPGLSTSIPLRMSSYTFKRPVTRITPHPGNEVRYHQWEESLEKPQQVCWQRRLQGLQAYSSAGELSSTLDLANTLQKLVPSYTGGSLLEDLASGLEHSCPMPHLACSSDAVEIIPAEGVGISQLLCKQFLVTEEDIRKQEGKVKTVRERLAIALIADGLANEAEKVRDQEGRPEKR.

The interval 1 to 104 (MAKSSQRKQR…KLVPSYTGGS (104 aa)) is transcription repressor.

The protein belongs to the MBD3L family. Highly expressed in testis. Detected at low levels in pancreas. Not detected in the other tissues tested.

It is found in the nucleus. Functionally, transcriptional repressor. The protein is Methyl-CpG-binding domain protein 3-like 1 (MBD3L1) of Homo sapiens (Human).